The primary structure comprises 274 residues: MSVRKLKPITPGQRFRVVNGFDAITTDKPERSLIAPIKNSGGRNSQGKMTMRYTGGGHKQRYRIIDFKRTKDGIPASVKSIEYDPNRTAFIALLAYADGEKTYIIAQNGLQVGQKVVSGEGSAPEIGNTLPLSKIPLGTVISCIELRPGQGAVIARSAGTFAQLMARDGKYATIKMPSGETRLILLTCSATIGAVSNSDHQLIVSGKAGRTRWLGRRPRTRPVAMNPVDHPMGGGEGRSSGGHPRSRNGIPAKGYRTRSKKNPSNKYIVERRKK.

2 disordered regions span residues 34-53 (IAPIKNSGGRNSQGKMTMRY) and 216-274 (RRPR…RRKK).

This sequence belongs to the universal ribosomal protein uL2 family. In terms of assembly, part of the 50S ribosomal subunit. Forms a bridge to the 30S subunit in the 70S ribosome.

Its function is as follows. One of the primary rRNA binding proteins. Required for association of the 30S and 50S subunits to form the 70S ribosome, for tRNA binding and peptide bond formation. It has been suggested to have peptidyltransferase activity; this is somewhat controversial. Makes several contacts with the 16S rRNA in the 70S ribosome. This is Large ribosomal subunit protein uL2 from Flavobacterium psychrophilum (strain ATCC 49511 / DSM 21280 / CIP 103535 / JIP02/86).